A 379-amino-acid polypeptide reads, in one-letter code: MAATAAAVVAEEDTELRDLLVQTLENSGVLNRIKAELRAAVFLALEEQEKVENKTPLVNESLKKFLNTKDGRLVASLVAEFLQFFNLDFTLAVFQPETSTLQGLEGRENLARDLGIIEAEGTVGGPLLLEVIRRCQQKEKGPTTGEGALDLSDVHPPPKSPEGKTSAQTTPSKKANNEANQSDTSVSLSEPKSKSSLHLLSHETKIGSFLSNKTLDGKDKAGLCPDEDDMEGDSFFDDPIPKPEKTYGLRSEPRKQPGSLASLSDAPPLKSGLSSLAGAPSLKDSESKRGNTVLKDLKLISGKIGSLGLGTGEDDDYVDDFNSTSHRSEKSEISIGEEIEEDLSVEIDDINTSDKLDDLTQDLTVSQLSDVADYLEDVA.

Positions 70–102 (DGRLVASLVAEFLQFFNLDFTLAVFQPETSTLQ) constitute a LisH domain. Residues 139–196 (EKGPTTGEGALDLSDVHPPPKSPEGKTSAQTTPSKKANNEANQSDTSVSLSEPKSKSS) form a disordered region. T143 carries the post-translational modification Phosphothreonine. Residues S152 and S160 each carry the phosphoserine modification. Residues 163-184 (GKTSAQTTPSKKANNEANQSDT) show a composition bias toward polar residues. Phosphothreonine is present on T170. S182 bears the Phosphoserine mark. Residues 185 to 196 (SVSLSEPKSKSS) are compositionally biased toward low complexity. At T214 the chain carries Phosphothreonine. The segment at 216–288 (DGKDKAGLCP…APSLKDSESK (73 aa)) is disordered. Acidic residues predominate over residues 225 to 236 (PDEDDMEGDSFF). Residues 239-255 (PIPKPEKTYGLRSEPRK) are compositionally biased toward basic and acidic residues. Residues 266 to 282 (APPLKSGLSSLAGAPSL) are compositionally biased toward low complexity. Residues S281 and S306 each carry the phosphoserine modification. Y317 carries the post-translational modification Phosphotyrosine.

The protein belongs to the CEP43 family. In terms of assembly, homodimer. Part of a ternary complex that contains CEP350, CEP43 and MAPRE1. Interacts directly with CEP350 and MAPRE1. Interacts with CEP19. Interacts (via N-terminus) with CEP350 (via C-terminus).

The protein localises to the cytoplasm. The protein resides in the cytoskeleton. It localises to the microtubule organizing center. Its subcellular location is the centrosome. It is found in the centriole. The protein localises to the cilium basal body. Required for anchoring microtubules to the centrosomes. Required for ciliation. The sequence is that of Centrosomal protein 43 (CEP43) from Macaca fascicularis (Crab-eating macaque).